Here is a 389-residue protein sequence, read N- to C-terminus: 8-amino-7-oxononanoate synthase (389 aa).

Arg-18 lines the substrate pocket. Gly-104–Tyr-105 contacts pyridoxal 5'-phosphate. Residue His-129 coordinates substrate. 3 residues coordinate pyridoxal 5'-phosphate: Ser-176, His-204, and Thr-232. Position 235 is an N6-(pyridoxal phosphate)lysine (Lys-235). Substrate is bound at residue Thr-351.

This sequence belongs to the class-II pyridoxal-phosphate-dependent aminotransferase family. BioF subfamily. Homodimer. Pyridoxal 5'-phosphate serves as cofactor.

It catalyses the reaction 6-carboxyhexanoyl-[ACP] + L-alanine + H(+) = (8S)-8-amino-7-oxononanoate + holo-[ACP] + CO2. It functions in the pathway cofactor biosynthesis; biotin biosynthesis. Catalyzes the decarboxylative condensation of pimeloyl-[acyl-carrier protein] and L-alanine to produce 8-amino-7-oxononanoate (AON), [acyl-carrier protein], and carbon dioxide. The chain is 8-amino-7-oxononanoate synthase from Citrifermentans bemidjiense (strain ATCC BAA-1014 / DSM 16622 / JCM 12645 / Bem) (Geobacter bemidjiensis).